Reading from the N-terminus, the 423-residue chain is Gamma-glutamyl phosphate reductase (423 aa).

Belongs to the gamma-glutamyl phosphate reductase family.

The protein resides in the cytoplasm. It carries out the reaction L-glutamate 5-semialdehyde + phosphate + NADP(+) = L-glutamyl 5-phosphate + NADPH + H(+). Its pathway is amino-acid biosynthesis; L-proline biosynthesis; L-glutamate 5-semialdehyde from L-glutamate: step 2/2. Its function is as follows. Catalyzes the NADPH-dependent reduction of L-glutamate 5-phosphate into L-glutamate 5-semialdehyde and phosphate. The product spontaneously undergoes cyclization to form 1-pyrroline-5-carboxylate. This Paraburkholderia xenovorans (strain LB400) protein is Gamma-glutamyl phosphate reductase.